Consider the following 119-residue polypeptide: MTISYTFTRELRLLTPAQFKSVFSKPIKASSAEITLLAIPNTEQHPRIGLTVAKRFVKKAHQRNRIKRIIRDNFRLHQHELPAIDIVVLVRNGVVEMENAELHKLVEKLWRKLNRRYNG.

It belongs to the RnpA family. As to quaternary structure, consists of a catalytic RNA component (M1 or rnpB) and a protein subunit.

It carries out the reaction Endonucleolytic cleavage of RNA, removing 5'-extranucleotides from tRNA precursor.. In terms of biological role, RNaseP catalyzes the removal of the 5'-leader sequence from pre-tRNA to produce the mature 5'-terminus. It can also cleave other RNA substrates such as 4.5S RNA. The protein component plays an auxiliary but essential role in vivo by binding to the 5'-leader sequence and broadening the substrate specificity of the ribozyme. The sequence is that of Ribonuclease P protein component from Shewanella woodyi (strain ATCC 51908 / MS32).